The following is a 696-amino-acid chain: Divalent metal transporter 1 (696 aa).

The segment at M1–D31 is disordered. At M1–K236 the chain is on the cytoplasmic side. The segment covering I11–I24 has biased composition (polar residues). Residues L237 to L255 traverse the membrane as a helical segment. Residues D256–R288 are Vacuolar-facing. An N-linked (GlcNAc...) asparagine glycan is attached at N278. The chain crosses the membrane as a helical span at residues L289 to G311. Over H312–S331 the chain is Cytoplasmic. A helical membrane pass occupies residues Y332–I357. Topologically, residues N358–G362 are vacuolar. A helical transmembrane segment spans residues I363 to L382. The Cytoplasmic segment spans residues E383–V393. The chain crosses the membrane as a helical span at residues L394 to F416. At Q417–D435 the chain is on the vacuolar side. Residues T436–L455 form a helical membrane-spanning segment. Topologically, residues T456–L475 are cytoplasmic. The chain crosses the membrane as a helical span at residues G476–A499. The Vacuolar segment spans residues E500–S529. N502 carries N-linked (GlcNAc...) asparagine glycosylation. Residues M530–F546 traverse the membrane as a helical segment. Residues M547–P566 lie on the Cytoplasmic side of the membrane. The helical transmembrane segment at F567–V585 threads the bilayer. Over S586–S596 the chain is Vacuolar. Residues N597–Y615 traverse the membrane as a helical segment. Over R616 to K634 the chain is Cytoplasmic. A helical transmembrane segment spans residues Y635–L657. The Vacuolar portion of the chain corresponds to Q658–S662. The helical transmembrane segment at N663–F684 threads the bilayer. Residues N685 to S696 are Cytoplasmic-facing.

This sequence belongs to the NRAMP (TC 2.A.55) family.

The protein localises to the vacuole membrane. The enzyme catalyses Fe(2+)(in) = Fe(2+)(out). Iron transporter. Required for parasite development during the blood stages. Required for full pathogenicity. The chain is Divalent metal transporter 1 from Plasmodium yoelii.